Reading from the N-terminus, the 216-residue chain is 3-isopropylmalate dehydratase small subunit (216 aa).

Belongs to the LeuD family. LeuD type 1 subfamily. Heterodimer of LeuC and LeuD.

The catalysed reaction is (2R,3S)-3-isopropylmalate = (2S)-2-isopropylmalate. It functions in the pathway amino-acid biosynthesis; L-leucine biosynthesis; L-leucine from 3-methyl-2-oxobutanoate: step 2/4. Its function is as follows. Catalyzes the isomerization between 2-isopropylmalate and 3-isopropylmalate, via the formation of 2-isopropylmaleate. In Bordetella avium (strain 197N), this protein is 3-isopropylmalate dehydratase small subunit.